Reading from the N-terminus, the 159-residue chain is NADH-quinone oxidoreductase subunit B (159 aa).

The [4Fe-4S] cluster site is built by Cys32, Cys33, Cys97, and Cys126.

The protein belongs to the complex I 20 kDa subunit family. As to quaternary structure, NDH-1 is composed of 14 different subunits. Subunits NuoB, C, D, E, F, and G constitute the peripheral sector of the complex. [4Fe-4S] cluster is required as a cofactor.

The protein resides in the cell inner membrane. It carries out the reaction a quinone + NADH + 5 H(+)(in) = a quinol + NAD(+) + 4 H(+)(out). NDH-1 shuttles electrons from NADH, via FMN and iron-sulfur (Fe-S) centers, to quinones in the respiratory chain. The immediate electron acceptor for the enzyme in this species is believed to be ubiquinone. Couples the redox reaction to proton translocation (for every two electrons transferred, four hydrogen ions are translocated across the cytoplasmic membrane), and thus conserves the redox energy in a proton gradient. This chain is NADH-quinone oxidoreductase subunit B, found in Helicobacter pylori (strain HPAG1).